The following is a 513-amino-acid chain: ATP synthase subunit alpha (513 aa).

ATP is bound at residue G169 to T176.

It belongs to the ATPase alpha/beta chains family. As to quaternary structure, F-type ATPases have 2 components, CF(1) - the catalytic core - and CF(0) - the membrane proton channel. CF(1) has five subunits: alpha(3), beta(3), gamma(1), delta(1), epsilon(1). CF(0) has three main subunits: a(1), b(2) and c(9-12). The alpha and beta chains form an alternating ring which encloses part of the gamma chain. CF(1) is attached to CF(0) by a central stalk formed by the gamma and epsilon chains, while a peripheral stalk is formed by the delta and b chains.

Its subcellular location is the cell inner membrane. The catalysed reaction is ATP + H2O + 4 H(+)(in) = ADP + phosphate + 5 H(+)(out). Its function is as follows. Produces ATP from ADP in the presence of a proton gradient across the membrane. The alpha chain is a regulatory subunit. This is ATP synthase subunit alpha from Vesicomyosocius okutanii subsp. Calyptogena okutanii (strain HA).